We begin with the raw amino-acid sequence, 119 residues long: Ribonuclease P protein component (119 aa).

Belongs to the RnpA family. Consists of a catalytic RNA component (M1 or rnpB) and a protein subunit.

The enzyme catalyses Endonucleolytic cleavage of RNA, removing 5'-extranucleotides from tRNA precursor.. Functionally, RNaseP catalyzes the removal of the 5'-leader sequence from pre-tRNA to produce the mature 5'-terminus. It can also cleave other RNA substrates such as 4.5S RNA. The protein component plays an auxiliary but essential role in vivo by binding to the 5'-leader sequence and broadening the substrate specificity of the ribozyme. The protein is Ribonuclease P protein component of Borreliella burgdorferi (strain ATCC 35210 / DSM 4680 / CIP 102532 / B31) (Borrelia burgdorferi).